A 1163-amino-acid polypeptide reads, in one-letter code: Rho GTPase-activating protein 45 (1163 aa).

Residues 1 to 99 form a disordered region; it reads MFSRKKRELM…KRPTSLSRHA (99 aa). 2 positions are modified to phosphoserine: S23 and S25. The segment covering 55-65 has biased composition (basic and acidic residues); sequence LPKELPRKDGA. Residues S100, S120, and S126 each carry the phosphoserine modification. Disordered stretches follow at residues 118–137, 262–282, and 454–475; these read HRSP…GTGP, PPGD…EGTP, and EEEQ…LDKR. The 271-residue stretch at 296–566 folds into the F-BAR domain; that stretch reads EEVDVLLQRC…SSKLYDPGQQ (271 aa). Residues 403-526 are a coiled coil; sequence EHEKRRKEIK…QIQEVIRQSD (124 aa). The segment covering 458 to 470 has biased composition (low complexity); sequence AGTAPGAGSTATK. 3 positions are modified to phosphoserine: S596, S605, and S619. Residues 610–695 are disordered; that stretch reads DVAGPEAAGS…VDPEGGAGAS (86 aa). The span at 633 to 644 shows a compositional bias: basic residues; it reads KGHRAGRGHQVH. S646 carries the phosphoserine modification. Low complexity predominate over residues 673–682; the sequence is TSSSGTMSST. The Phorbol-ester/DAG-type zinc-finger motif lies at 729 to 774; sequence THRLRKLRTPAKCRECNSYVYFQGAECEECCLACHKKCLETLAIQC. Residues 788-1001 form the Rho-GAP domain; the sequence is QDFSHAARSA…TLIVHYGLVF (214 aa). S976, S1054, S1057, and S1059 each carry phosphoserine. Disordered regions lie at residues 1042–1067 and 1087–1163; these read AAED…ASEL and SEAS…PEFV. A compositionally biased stretch (low complexity) spans 1087 to 1099; that stretch reads SEASLEEASGSHS. Residues 1125-1137 show a composition bias toward polar residues; that stretch reads SGFNTNQSNNVLQ.

The protein localises to the cytoplasm. It is found in the cell projection. The protein resides in the ruffle membrane. In terms of biological role, contains a GTPase activator for the Rho-type GTPases (RhoGAP) domain that would be able to negatively regulate the actin cytoskeleton as well as cell spreading. However, also contains N-terminally a BAR-domin which is able to play an autoinhibitory effect on this RhoGAP activity. This is Rho GTPase-activating protein 45 from Pongo abelii (Sumatran orangutan).